The chain runs to 312 residues: Formimidoylglutamase (312 aa).

Mn(2+) contacts are provided by histidine 123, aspartate 152, histidine 154, aspartate 156, cysteine 243, and aspartate 245.

It belongs to the arginase family. It depends on Mn(2+) as a cofactor.

It catalyses the reaction N-formimidoyl-L-glutamate + H2O = formamide + L-glutamate. Its pathway is amino-acid degradation; L-histidine degradation into L-glutamate; L-glutamate from N-formimidoyl-L-glutamate (hydrolase route): step 1/1. Catalyzes the conversion of N-formimidoyl-L-glutamate to L-glutamate and formamide. This chain is Formimidoylglutamase, found in Pseudomonas fluorescens (strain ATCC BAA-477 / NRRL B-23932 / Pf-5).